We begin with the raw amino-acid sequence, 98 residues long: Large ribosomal subunit protein uL23 (98 aa).

Belongs to the universal ribosomal protein uL23 family. As to quaternary structure, part of the 50S ribosomal subunit. Contacts protein L29, and trigger factor when it is bound to the ribosome.

Functionally, one of the early assembly proteins it binds 23S rRNA. One of the proteins that surrounds the polypeptide exit tunnel on the outside of the ribosome. Forms the main docking site for trigger factor binding to the ribosome. This Methylorubrum populi (strain ATCC BAA-705 / NCIMB 13946 / BJ001) (Methylobacterium populi) protein is Large ribosomal subunit protein uL23.